We begin with the raw amino-acid sequence, 466 residues long: Collagenase 3 (466 aa).

Residues 1 to 13 form the signal peptide; sequence ATFFLLSWTHCWS. Positions 14 to 98 are cleaved as a propeptide — activation peptide; it reads LPLPYGDDDD…PRCGVPDVGV (85 aa). Residues 89–96 carry the Cysteine switch motif; the sequence is PRCGVPDV. Cysteine 91 serves as a coordination point for Zn(2+). The N-linked (GlcNAc...) asparagine glycan is linked to asparagine 112. Aspartate 123 contributes to the Ca(2+) binding site. Asparagine 147 is a glycosylation site (N-linked (GlcNAc...) asparagine). Aspartate 157 contacts Ca(2+). 2 residues coordinate Zn(2+): histidine 167 and aspartate 169. Residues 171–241 form an interaction with TIMP2 region; that stretch reads YPFDGPSGLL…GALMFPIYTY (71 aa). Positions 174, 175, 177, and 179 each coordinate Ca(2+). Histidine 182 is a binding site for Zn(2+). Residues asparagine 189, glycine 191, and aspartate 193 each coordinate Ca(2+). Histidine 195 contacts Zn(2+). The Ca(2+) site is built by aspartate 197, aspartate 198, and glutamate 200. Position 217 (histidine 217) interacts with Zn(2+). Glutamate 218 is an active-site residue. Residues histidine 221, histidine 227, and methionine 235 each contribute to the Zn(2+) site. Residues 258–279 form a disordered region; the sequence is QSLYGPGDEDPNPKHPKTPEKC. Positions 263-466 are interaction with collagen; that stretch reads PGDEDPNPKH…VMPTNSLLWC (204 aa). The segment covering 268–279 has biased composition (basic and acidic residues); it reads PNPKHPKTPEKC. 4 Hemopexin repeats span residues 276-325, 326-372, 374-422, and 423-466; these read PEKC…WPEL, PNHV…GFPK, VKRL…FPGI, and GDKV…LLWC. A disulfide bridge connects residues cysteine 279 and cysteine 466. Ca(2+) contacts are provided by aspartate 286, isoleucine 288, aspartate 330, and alanine 332. At tyrosine 361 the chain carries Phosphotyrosine; by PKDCC. Positions 378 and 380 each coordinate Ca(2+). N-linked (GlcNAc...) asparagine glycosylation is present at asparagine 404. Positions 427 and 429 each coordinate Ca(2+).

It belongs to the peptidase M10A family. The cofactor is Ca(2+). Zn(2+) is required as a cofactor. Post-translationally, the proenzyme is activated by removal of the propeptide; this cleavage can be effected by other matrix metalloproteinases, such as MMP2, MMP3 and MMP14 and may involve several cleavage steps. Cleavage can also be autocatalytic, after partial maturation by another protease or after treatment with 4-aminophenylmercuric acetate (APMA) (in vitro). In terms of processing, N-glycosylated. Tyrosine phosphorylated by PKDCC/VLK.

The protein localises to the secreted. Its subcellular location is the extracellular space. The protein resides in the extracellular matrix. In terms of biological role, plays a role in the degradation of extracellular matrix proteins including fibrillar collagen, fibronectin, TNC and ACAN. Cleaves triple helical collagens, including type I, type II and type III collagen, but has the highest activity with soluble type II collagen. Can also degrade collagen type IV, type XIV and type X. May also function by activating or degrading key regulatory proteins, such as TGFB1 and CCN2. Plays a role in wound healing, tissue remodeling, cartilage degradation, bone development, bone mineralization and ossification. Required for normal embryonic bone development and ossification. Plays a role in the healing of bone fractures via endochondral ossification. Plays a role in wound healing, probably by a mechanism that involves proteolytic activation of TGFB1 and degradation of CCN2. Plays a role in keratinocyte migration during wound healing. May play a role in cell migration and in tumor cell invasion. In Rattus norvegicus (Rat), this protein is Collagenase 3 (Mmp13).